Consider the following 152-residue polypeptide: MTFTDLVIILFILALLAYAVYDQFIMPRRNGPVLLAIPLLRRSRVDGLIFVGLTAILIYNNITQHGTPITTWLLSALALMGLYLFWIRTPKIIFKPRGFFFANVWIEYQRIKEMNLSEDGVLVMQLEQRRLLIRVRNIDDLEKIYKLLVSTQ.

Transmembrane regions (helical) follow at residues 6 to 26 (LVII…QFIM), 45 to 65 (VDGL…ITQH), and 67 to 87 (TPIT…LFWI).

It belongs to the UPF0266 family.

The protein localises to the cell inner membrane. The protein is UPF0266 membrane protein KPK_1957 of Klebsiella pneumoniae (strain 342).